The primary structure comprises 314 residues: Lipoyl synthase (314 aa).

[4Fe-4S] cluster-binding residues include Cys-67, Cys-72, Cys-78, Cys-93, Cys-97, Cys-100, and Ser-306. Residues 79–295 (FNRGTATFMI…KNYALSIGFK (217 aa)) enclose the Radical SAM core domain.

Belongs to the radical SAM superfamily. Lipoyl synthase family. It depends on [4Fe-4S] cluster as a cofactor.

It localises to the cytoplasm. It catalyses the reaction [[Fe-S] cluster scaffold protein carrying a second [4Fe-4S](2+) cluster] + N(6)-octanoyl-L-lysyl-[protein] + 2 oxidized [2Fe-2S]-[ferredoxin] + 2 S-adenosyl-L-methionine + 4 H(+) = [[Fe-S] cluster scaffold protein] + N(6)-[(R)-dihydrolipoyl]-L-lysyl-[protein] + 4 Fe(3+) + 2 hydrogen sulfide + 2 5'-deoxyadenosine + 2 L-methionine + 2 reduced [2Fe-2S]-[ferredoxin]. It functions in the pathway protein modification; protein lipoylation via endogenous pathway; protein N(6)-(lipoyl)lysine from octanoyl-[acyl-carrier-protein]: step 2/2. Its function is as follows. Catalyzes the radical-mediated insertion of two sulfur atoms into the C-6 and C-8 positions of the octanoyl moiety bound to the lipoyl domains of lipoate-dependent enzymes, thereby converting the octanoylated domains into lipoylated derivatives. This chain is Lipoyl synthase, found in Buchnera aphidicola subsp. Baizongia pistaciae (strain Bp).